A 135-amino-acid chain; its full sequence is Histone H3 type 1 (135 aa).

The disordered stretch occupies residues 1-40; sequence MARTKQTARKSTGGKAPRKQLATKAARKTPATGGVKKPHR. Lys-5 is subject to N6-methyllysine. N6-acetyllysine; alternate is present on Lys-10. Lys-10 is subject to N6-methyllysine; alternate. Ser-11 bears the Phosphoserine mark. Thr-12 carries the phosphothreonine modification. N6-acetyllysine occurs at positions 15, 19, and 24. N6-acetyllysine; alternate is present on Lys-28. Lys-28 carries the N6-methyllysine; alternate modification. Lys-36 and Lys-37 each carry N6-methyllysine.

This sequence belongs to the histone H3 family. The nucleosome is a histone octamer containing two molecules each of H2A, H2B, H3 and H4 assembled in one H3-H4 heterotetramer and two H2A-H2B heterodimers. The octamer wraps approximately 147 bp of DNA. Post-translationally, acetylation is generally linked to gene activation. Acetylated to form H3K9ac (11%), H3K14ac (17%), H3K18ac (11%), H3K23ac (16%) and H3K27ac (7%). H3K4, H3K35 and H3K36 are not acetylated. H3K4me prevents acetylation. 32% of the histone H3 are acetylated with, on average, 2.4 acetyl-Lys. They are all continuously deacatylated and re-acetylated with a half-life of approximately 2 minutes. Monomethylated to form H3K4me1 (81%), H3K9me1 (16%), H3K27me1 (25%), H3K35me1 (25%) and H3K36me1 (5%). No methylation at H3K14, H3K18 and H3K23. Methylated by a protein complex that includes Mut11. Set1 methylates specifically H3K4. H3K4me1 is associated with silenced euchromatin. Set3 forms H3K9me1, while H3K9me2 is undetected. H3K9me1 is specifically associated with silent, multi-copy transgenes. In terms of processing, no phosphorylation detected.

The protein localises to the nucleus. The protein resides in the chromosome. Its function is as follows. Core component of nucleosome. Nucleosomes wrap and compact DNA into chromatin, limiting DNA accessibility to the cellular machineries which require DNA as a template. Histones thereby play a central role in transcription regulation, DNA repair, DNA replication and chromosomal stability. DNA accessibility is regulated via a complex set of post-translational modifications of histones, also called histone code, and nucleosome remodeling. The sequence is that of Histone H3 type 1 (ch3-I) from Chlamydomonas reinhardtii (Chlamydomonas smithii).